Reading from the N-terminus, the 791-residue chain is Protein Rf1, mitochondrial (791 aa).

Residues 1 to 27 (MARRAASRAVGALRSDGSIQGRGGRAG) constitute a mitochondrion transit peptide. Positions 1–31 (MARRAASRAVGALRSDGSIQGRGGRAGGSGA) are disordered. A compositionally biased stretch (gly residues) spans 20–30 (QGRGGRAGGSG). PPR repeat units lie at residues 86–120 (DLCT…GFRV), 121–156 (DAIA…GCIP), 157–194 (NVFS…GSPP), 195–229 (DVVS…GILP), 230–264 (DVVT…GVMP), 265–299 (DCMT…GVEP), 300–334 (DVVT…GLKP), 335–369 (EITT…GIHP), 370–404 (DHYV…GLNP), 405–439 (NAVT…GLSP), 440–474 (GNIV…GICL), 475–509 (NTIF…GVKP), 510–544 (NVIT…GLKP), 545–579 (NTVT…GVSP), 580–614 (DIIT…GTQI), 615–649 (ELST…DLKL), 650–684 (EART…GLVP), 685–719 (NYWT…GCTV), and 720–754 (DSGM…HFSL).

The protein resides in the mitochondrion. In terms of biological role, reduces the expression of the cytoplasmic male sterility (CMS)-associated mitochondrial gene ORF79, encoding a cytotoxic peptide. Can restore male fertility by blocking ORF79 production via endonucleolytic cleavage of dicistronic ATP6/ORF79 mRNA. Promotes the editing of ATP6 mRNAs independently of its cleavage function. This Oryza sativa subsp. indica (Rice) protein is Protein Rf1, mitochondrial (Rf1).